We begin with the raw amino-acid sequence, 175 residues long: Lipopolysaccharide export system protein LptH (175 aa).

A signal peptide spans 1 to 24 (MRFVNTLPLIFGLTAALGSSMALA).

Belongs to the LptA family. Component of the lipopolysaccharide transport and assembly complex. Mainly exists as a dimer in solution. Tends to oligomerize already in solution. The protomers follow one another in a head-to-tail fashion throughout the crystal lattice, yielding a continuous fiber arrangement.

Its subcellular location is the periplasm. Its function is as follows. Involved in the assembly of lipopolysaccharide (LPS). Required for the translocation of LPS from the inner membrane to the outer membrane. May form a bridge between the inner membrane and the outer membrane, via interactions with LptC and LptD, thereby facilitating LPS transfer across the periplasm. Binds LPS. Important for cell envelope stability and essential for growth, cell viability and ability to cause infection in different animal models. This Pseudomonas aeruginosa (strain ATCC 15692 / DSM 22644 / CIP 104116 / JCM 14847 / LMG 12228 / 1C / PRS 101 / PAO1) protein is Lipopolysaccharide export system protein LptH.